The following is a 229-amino-acid chain: MMGSVELNLRETELCLGLPGGDTVAPVTGNKRGFSETVDLKLNLNNEPANKEGSTTHDVVTFDSKEKSACPKDPAKPPAKAQVVGWPPVRSYRKNVMVSCQKSSGGPEAAAFVKVSMDGAPYLRKIDLRMYKSYDELSNALSNMFSSFTMGKHGGEEGMIDFMNERKLMDLVNSWDYVPSYEDKDGDWMLVGDVPWPMFVDTCKRLRLMKGSDAIGLAPRAMEKCKSRA.

Residues 14-18 carry the EAR-like (transcriptional repression) motif; that stretch reads LCLGL. Residues 110–211 enclose the PB1 domain; that stretch reads AAFVKVSMDG…TCKRLRLMKG (102 aa).

This sequence belongs to the Aux/IAA family. In terms of assembly, homodimers and heterodimers. Interacts with the auxin response factors ARF1 and IAA24. Interacts with IAA1. Interacts with TPL. Interacts (via PB1 domain) with ARF7 (via PB1 domain). Post-translationally, phosphorylated by phytochrome A in vitro.

It localises to the nucleus. In terms of biological role, aux/IAA proteins are short-lived transcriptional factors that function as repressors of early auxin response genes at low auxin concentrations. Repression is thought to result from the interaction with auxin response factors (ARFs), proteins that bind to the auxin-responsive promoter element (AuxRE). Formation of heterodimers with ARF proteins may alter their ability to modulate early auxin response genes expression. In Arabidopsis thaliana (Mouse-ear cress), this protein is Auxin-responsive protein IAA17 (IAA17).